The chain runs to 310 residues: Tryptophan 2,3-dioxygenase (310 aa).

A disordered region spans residues M1–A39. Residues F79–H83, Y141, and R145 each bind substrate. Residue H268 coordinates heme. T282 serves as a coordination point for substrate.

The protein belongs to the tryptophan 2,3-dioxygenase family. As to quaternary structure, homotetramer. Heme serves as cofactor.

The catalysed reaction is L-tryptophan + O2 = N-formyl-L-kynurenine. Its pathway is amino-acid degradation; L-tryptophan degradation via kynurenine pathway; L-kynurenine from L-tryptophan: step 1/2. Functionally, heme-dependent dioxygenase that catalyzes the oxidative cleavage of the L-tryptophan (L-Trp) pyrrole ring and converts L-tryptophan to N-formyl-L-kynurenine. Catalyzes the oxidative cleavage of the indole moiety. The sequence is that of Tryptophan 2,3-dioxygenase from Burkholderia multivorans (strain ATCC 17616 / 249).